A 299-amino-acid chain; its full sequence is SET domain-containing protein 9 (299 aa).

In terms of domain architecture, SET spans 122–295 (FSVAQATSSL…QGEELFSNYY (174 aa)). Tyrosine 294 contacts S-adenosyl-L-methionine.

The protein belongs to the class V-like SAM-binding methyltransferase superfamily.

This chain is SET domain-containing protein 9 (SETD9), found in Homo sapiens (Human).